The sequence spans 623 residues: MSTSSSDPFFNFTKSSFRSAAAQKASATSLPPLPGPDKKVPGMDIKYDVVIVGSGPIGCTYARELVEAGYKVAMFDIGEIDSGLKIGAHKKNTVEYQKNIDKFVNVIQGQLMSVSVPVNTLVIDTLSPTSWQASSFFVRNGSNPEQDPLRNLSGQAVTRVVGGMSTHWTCATPRFDREQRPLLVKDDQDADDAEWDRLYTKAESYFKTGTDQFKESIRHNLVLNKLAEEYKGQRDFQQIPLAATRRSPTFVEWSSANTVFDLQNRPNTDAPNERFNLFPAVACERVVRNTSNSEIESLHIHDLISGDRFEIKADVFVLTAGAVHNAQLLVNSGFGQLGRPDPANPPQLLPSLGSYITEQSLVFCQTVMSTELIDSVKSDMIIRGNPGDLGYSVTYTPGAETNKHPDWWNEKVKNHMMQHQEDPLPIPFEDPEPQVTTLFQPSHPWHTQIHRDAFSYGAVQQSIDSRLIVDWRFFGRTEPKEENKLWFSDKITDTYNMPQPTFDFRFPAGRTSKEAEDMMTDMCVMSAKIGGFLPGSLPQFMEPGLVLHLGGTHRMGFDEQEDKCCVNTDSRVFGFKNLFLGGCGNIPTAYGANPTLTAMSLAIKSCEYIKNNFTPSPFTDQAE.

A signal peptide spans 1-27; that stretch reads MSTSSSDPFFNFTKSSFRSAAAQKASA. A propeptide spanning residues 28 to 38 is cleaved from the precursor; sequence TSLPPLPGPDK. Tele-8alpha-FAD histidine is present on His167. Positions 448 and 450 each coordinate substrate. His548 functions as the Proton acceptor in the catalytic mechanism. Asn593 is a catalytic residue.

The protein belongs to the GMC oxidoreductase family. As to quaternary structure, homotetramer. It depends on FAD as a cofactor. Not glycosylated.

Its subcellular location is the periplasm. It carries out the reaction D-glucose + O2 = 2-dehydro-D-glucose + H2O2. Catalyzes the oxidation of various aldopyranoses and disaccharides on carbon-2 to the corresponding 2-keto sugars concomitant with the reduction of O(2) to H(2)O(2). Plays an important role in lignin degradation of wood rot fungi by supplying the essential cosubstrate H(2)O(2) for the ligninolytic peroxidases, lignin peroxidase and manganese-dependent peroxidase. The preferred substrate is D-glucose which is converted to 2-dehydro-D-glucose. Also acts on D-xylose, together with D-glucose the major sugars derived from wood, on L-sorbose, D-galactose and 1,5-anhydroglucitol, a diagnostic marker of diabetes mellitus. In Trametes versicolor (White-rot fungus), this protein is Pyranose 2-oxidase (P2OX).